Consider the following 575-residue polypeptide: Transmembrane protein 108 (575 aa).

The helical transmembrane segment at 9-29 (YCQLLSFLLILALTEALAFAI) threads the bilayer. The interaction with SH3GL2 stretch occupies residues 31 to 169 (EPSPRESLQV…TTTRRPPRPP (139 aa)). Residues 65–398 (MLTPNPDGPP…PSRVSESTIS (334 aa)) are disordered. The span at 74-87 (PSQAAAPMATPTPR) shows a compositional bias: low complexity. The span at 95–115 (HTISTIAATVTAPHSESSLST) shows a compositional bias: polar residues. Residues 146 to 160 (PPGATSRPTTAPPRT) show a composition bias toward low complexity. Residues 173 to 407 (RKGAGNSSRP…SGAKEETVAT (235 aa)) are interaction with DST (isoform 1). Positions 244–271 (YSSSPQPQTVAATTVPSNTSWAPTTTSL) are enriched in polar residues. Residues 290-318 (TFTSQGGTPDATAASGAPVSPQAAPVPSQ) show a composition bias toward low complexity. A compositionally biased stretch (polar residues) spans 329–352 (PSHSDSWLTVTPGTSRPLSTSSGV). Positions 353 to 366 (FTAATGPTPAAFDT) are enriched in low complexity. The segment covering 367–398 (SVSAPSQGIPQGASTTPQAPTHPSRVSESTIS) has biased composition (polar residues). Residues 469-489 (IAWVILAISVPISSCSVLLTV) traverse the membrane as a helical segment. Positions 490–575 (CCMKRKKKTA…FVGNDQVSEI (86 aa)) are interaction with CYFIP2.

In terms of assembly, interacts with DST (isoform 1). Interacts with SH3GL2. Interacts (via N-terminus) with CYFIP1 and CYFIP2; the interactions associate TMEM108 with the WAVE1 complex. Post-translationally, glycosylated.

It localises to the membrane. The protein resides in the postsynaptic density. It is found in the endosome membrane. Its subcellular location is the cell projection. The protein localises to the axon. It localises to the dendrite. The protein resides in the early endosome. Transmembrane protein required for proper cognitive functions. Involved in the development of dentate gyrus (DG) neuron circuitry, is necessary for AMPA receptors surface expression and proper excitatory postsynaptic currents of DG granule neurons. Regulates the organization and stability of the microtubule network of sensory neurons to allow axonal transport. Through the interaction with DST, mediates the docking of the dynein/dynactin motor complex to vesicle cargos for retrograde axonal transport. In hippocampal neurons, required for BDNF-dependent dendrite outgrowth. Cooperates with SH3GL2 and recruits the WAVE1 complex to facilitate actin-dependent BDNF:NTRK2 early endocytic trafficking and mediate signaling from early endosomes. The protein is Transmembrane protein 108 of Homo sapiens (Human).